The sequence spans 284 residues: tRNA uridine(34) hydroxylase (284 aa).

The 95-residue stretch at 132–226 (TGRPVVMLDT…YFEEVGGAHY (95 aa)) folds into the Rhodanese domain. C186 acts as the Cysteine persulfide intermediate in catalysis.

Belongs to the TrhO family.

The enzyme catalyses uridine(34) in tRNA + AH2 + O2 = 5-hydroxyuridine(34) in tRNA + A + H2O. Functionally, catalyzes oxygen-dependent 5-hydroxyuridine (ho5U) modification at position 34 in tRNAs. The chain is tRNA uridine(34) hydroxylase from Burkholderia lata (strain ATCC 17760 / DSM 23089 / LMG 22485 / NCIMB 9086 / R18194 / 383).